The chain runs to 943 residues: Calcium-activated chloride channel regulator 2 (943 aa).

An N-terminal signal peptide occupies residues 1 to 31 (MTQRSIAGPICNLKFVTLLVALSSELPFLGA). Over 32 to 901 (GVQLQDNGYN…SDPVPARDYL (870 aa)) the chain is Extracellular. Residues 54-205 (NQNLISNIKE…CSSDITGIFV (152 aa)) are metalloprotease domain. Residues asparagine 74 and asparagine 150 are each glycosylated (N-linked (GlcNAc...) asparagine). Zn(2+) is bound at residue histidine 164. Glutamate 165 is an active-site residue. Histidine 168 and aspartate 175 together coordinate Zn(2+). Asparagine 231 carries N-linked (GlcNAc...) asparagine glycosylation. Positions 311–483 (VVCLVLDVSS…NSMIDAFSRI (173 aa)) constitute a VWFA domain. 2 N-linked (GlcNAc...) asparagine glycosylation sites follow: asparagine 522 and asparagine 822. Residues 902–922 (ILKGVLTAMGLIGIICLIIVV) form a helical membrane-spanning segment. At 923–943 (THHTLSRKKRADKKENGTKLL) the chain is on the cytoplasmic side.

This sequence belongs to the CLCR family. The 141 kDa mature form is autoproteolytically cleaved by the metalloprotease domain, producing a 109 kDa form and a 35 kDa form. The cleavage is necessary for calcium-activated chloride channel (CaCC) activation activity. Post-translationally, N-glycosylated. As to expression, expressed in cornea, skin, vagina, esophagus, and larynx (at protein level). Expressed in trachea and mammary gland. Weakly expressed in testis and kidney. Highly expressed in corneal epithelium, colon and trachea. Moderately expressed in brain, urogenital organs, bladder, uterus and prostate. Highly expressed in tissues containing stratified epithelium including cornea, esophagus, larynx, skin and vagina than those tissues which contain only epithelial monolayers. Expressed in normal breast epithelium but not in breast cancer. Highly expressed during epithelial stratification. Expressed in endothelial cells of lung. Expressed selectively in endothelia of small pulmonary arteries, arterioles, and subpleural and interlobular venules.

Its subcellular location is the cell membrane. It is found in the basal cell membrane. The protein resides in the cell junction. The protein localises to the secreted. Functionally, plays a role in modulating chloride current across the plasma membrane in a calcium-dependent manner, and cell adhesion. Involved in basal cell adhesion and/or stratification of squamous epithelia. May act as a tumor suppressor in breast and colorectal cancer. Plays a key role for cell adhesion in the beginning stages of lung metastasis via the binding to ITGB4. The polypeptide is Calcium-activated chloride channel regulator 2 (CLCA2) (Homo sapiens (Human)).